Reading from the N-terminus, the 215-residue chain is Chloramphenicol acetyltransferase (215 aa).

H189 functions as the Proton acceptor in the catalytic mechanism.

Belongs to the chloramphenicol acetyltransferase family. Homotrimer.

It catalyses the reaction chloramphenicol + acetyl-CoA = chloramphenicol 3-acetate + CoA. Functionally, this enzyme is an effector of chloramphenicol resistance in bacteria. The sequence is that of Chloramphenicol acetyltransferase (cat) from Staphylococcus aureus.